The primary structure comprises 1180 residues: Integrin alpha-1 (1180 aa).

Residues 1 to 28 (MVPRRPASLEVTVACIWLLTVILGFCVS) form the signal peptide. The Extracellular segment spans residues 29–1142 (FNVDVKNSMS…SKDGLPGRVP (1114 aa)). One copy of the FG-GAP 1 repeat lies at 30–91 (NVDVKNSMSF…CPVGRERAMP (62 aa)). The cysteines at positions 82 and 92 are disulfide-linked. N-linked (GlcNAc...) asparagine glycans are attached at residues Asn-100, Asn-105, Asn-112, Asn-217, Asn-317, Asn-341, Asn-402, Asn-418, and Asn-459. The FG-GAP 2 repeat unit spans residues 101-160 (TSIPNVTEIKENMTFGSTLVTNPNGGFLACGPLYAYRCGHLHYTTGICSDVSPTFQVVNS). Residues 175-364 (IVLDGSNSIY…LGERIFALEA (190 aa)) enclose the VWFA domain. Residues 365–417 (TADQSAASFEMEMSQTGFSAHYSQDWVMLGAVGAYDWNGTVVMQKANQMVIPH) form an FG-GAP 3 repeat. FG-GAP repeat units lie at residues 422 to 474 (QTEP…DGNI), 475 to 537 (NILQ…RFEY), 556 to 614 (SCTK…TIRE), and 618 to 678 (QRIP…FEPN). Ca(2+) contacts are provided by Asp-497, Asp-499, Asp-501, and Asp-505. N-linked (GlcNAc...) asparagine glycosylation occurs at Asn-531. 8 residues coordinate Ca(2+): Asp-579, Asn-581, Asp-583, Asp-587, Asp-641, Asn-643, Asp-645, and Asp-649. Residues Cys-687 and Cys-696 are joined by a disulfide bond. Residues Asn-698, Asn-747, and Asn-779 are each glycosylated (N-linked (GlcNAc...) asparagine). Cys-702 and Cys-755 are disulfide-bonded. Cys-807 and Cys-813 form a disulfide bridge. Asn-820, Asn-839, Asn-882, Asn-907, Asn-938, Asn-965, Asn-973, and Asn-1007 each carry an N-linked (GlcNAc...) asparagine glycan. Cys-877 and Cys-885 are joined by a disulfide. 2 disulfide bridges follow: Cys-1029–Cys-1062 and Cys-1066–Cys-1073. Residues Asn-1084, Asn-1103, and Asn-1114 are each glycosylated (N-linked (GlcNAc...) asparagine). The chain crosses the membrane as a helical span at residues 1143–1165 (LWVILLSAFAGLLLLMLLILALW). Residues 1166-1180 (KIGFFKRPLKKKMEK) are Cytoplasmic-facing. Positions 1168-1172 (GFFKR) match the GFFKR motif motif.

Belongs to the integrin alpha chain family. As to quaternary structure, heterodimer of an alpha and a beta subunit. Alpha-1 associates with beta-1. Interacts with RAB21. Interacts (via cytoplasmic domain) with PTPN2; activates PTPN2 phosphatase activity towards EGFR and negatively regulates EGF signaling.

It localises to the membrane. Its function is as follows. Integrin alpha-1/beta-1 is a receptor for laminin and collagen. It recognizes the proline-hydroxylated sequence G-F-P-G-E-R in collagen. Involved in anchorage-dependent, negative regulation of EGF-stimulated cell growth. The polypeptide is Integrin alpha-1 (Itga1) (Rattus norvegicus (Rat)).